The following is a 96-amino-acid chain: Co-chaperonin GroES (96 aa).

Belongs to the GroES chaperonin family. In terms of assembly, heptamer of 7 subunits arranged in a ring. Interacts with the chaperonin GroEL.

Its subcellular location is the cytoplasm. Together with the chaperonin GroEL, plays an essential role in assisting protein folding. The GroEL-GroES system forms a nano-cage that allows encapsulation of the non-native substrate proteins and provides a physical environment optimized to promote and accelerate protein folding. GroES binds to the apical surface of the GroEL ring, thereby capping the opening of the GroEL channel. The chain is Co-chaperonin GroES from Chromohalobacter salexigens (strain ATCC BAA-138 / DSM 3043 / CIP 106854 / NCIMB 13768 / 1H11).